We begin with the raw amino-acid sequence, 624 residues long: Chaperone protein HtpG (624 aa).

The tract at residues Met-1–Arg-341 is a; substrate-binding. Residues Glu-342–Lys-550 form a b region. Residues Val-551–Lys-624 form a c region.

Belongs to the heat shock protein 90 family. As to quaternary structure, homodimer.

It localises to the cytoplasm. In terms of biological role, molecular chaperone. Has ATPase activity. The chain is Chaperone protein HtpG from Clostridium acetobutylicum (strain ATCC 824 / DSM 792 / JCM 1419 / IAM 19013 / LMG 5710 / NBRC 13948 / NRRL B-527 / VKM B-1787 / 2291 / W).